A 194-amino-acid polypeptide reads, in one-letter code: HTH-type transcriptional regulator BetI (194 aa).

Residues 8–68 enclose the HTH tetR-type domain; the sequence is EIRRAQLIDA…ATMRHVLRDL (61 aa). Positions 31–50 form a DNA-binding region, H-T-H motif; that stretch reads TLASVAQRANISTGIVSHYF.

It participates in amine and polyamine biosynthesis; betaine biosynthesis via choline pathway [regulation]. Its function is as follows. Repressor involved in the biosynthesis of the osmoprotectant glycine betaine. It represses transcription of the choline transporter BetT and the genes of BetAB involved in the synthesis of glycine betaine. In Burkholderia ambifaria (strain MC40-6), this protein is HTH-type transcriptional regulator BetI.